The following is a 441-amino-acid chain: tRNA(Ile)-lysidine synthase (441 aa).

ATP is bound at residue 27-32 (SGGVDS).

The protein belongs to the tRNA(Ile)-lysidine synthase family.

The protein localises to the cytoplasm. The enzyme catalyses cytidine(34) in tRNA(Ile2) + L-lysine + ATP = lysidine(34) in tRNA(Ile2) + AMP + diphosphate + H(+). Functionally, ligates lysine onto the cytidine present at position 34 of the AUA codon-specific tRNA(Ile) that contains the anticodon CAU, in an ATP-dependent manner. Cytidine is converted to lysidine, thus changing the amino acid specificity of the tRNA from methionine to isoleucine. The polypeptide is tRNA(Ile)-lysidine synthase (Proteus mirabilis (strain HI4320)).